A 739-amino-acid chain; its full sequence is Catalase-peroxidase 2 (739 aa).

The N-terminal stretch at 1-26 (MKKSTIPTLSALTLAMSLAFGGSVIA) is a signal peptide. The tryptophyl-tyrosyl-methioninium (Trp-Tyr) (with M-253) cross-link spans 105-227 (WHSAGVYRIF…MGATQMGLIY (123 aa)). The active-site Proton acceptor is the His-106. The tryptophyl-tyrosyl-methioninium (Tyr-Met) (with W-105) cross-link spans 227 to 253 (YVNPEGPNGVPDPLASAKEIRDTFGRM). His-268 serves as a coordination point for heme b.

The protein belongs to the peroxidase family. Peroxidase/catalase subfamily. Homodimer or homotetramer. Requires heme b as cofactor. In terms of processing, formation of the three residue Trp-Tyr-Met cross-link is important for the catalase, but not the peroxidase activity of the enzyme.

It carries out the reaction H2O2 + AH2 = A + 2 H2O. It catalyses the reaction 2 H2O2 = O2 + 2 H2O. Bifunctional enzyme with both catalase and broad-spectrum peroxidase activity. The protein is Catalase-peroxidase 2 of Shewanella sp. (strain MR-7).